The sequence spans 744 residues: Integrator complex subunit 11 homolog (744 aa).

Zn(2+) contacts are provided by His67, His69, Asp71, His72, His156, and Asp177. The HXHXDH motif motif lies at 67 to 72 (HFHLDH). Glu202 is an active-site residue. Residue His425 coordinates Zn(2+). Residues 626–669 (NNNTSDDNNNNNNNNNNNNNNNNNNNNNNNNNNNNNNNNNNNNN) form a disordered region.

This sequence belongs to the metallo-beta-lactamase superfamily. RNA-metabolizing metallo-beta-lactamase-like family. INTS11 subfamily. Component of the Integrator complex. The core complex associates with protein phosphatase 2A subunits, to form the Integrator-PP2A (INTAC) complex. The cofactor is Zn(2+).

It is found in the nucleus. Its subcellular location is the cytoplasm. In terms of biological role, RNA endonuclease component of the integrator complex, a multiprotein complex that terminates RNA polymerase II (Pol II) transcription in the promoter-proximal region of genes. The integrator complex provides a quality checkpoint during transcription elongation by driving premature transcription termination of transcripts that are unfavorably configured for transcriptional elongation: the complex terminates transcription by (1) catalyzing dephosphorylation of the C-terminal domain (CTD) of Pol II subunit polr2a, (2) degrading the exiting nascent RNA transcript via endonuclease activity and (3) promoting the release of Pol II from bound DNA. The integrator complex is also involved in terminating the synthesis of non-coding Pol II transcripts, such as enhancer RNAs (eRNAs), small nuclear RNAs (snRNAs), telomerase RNAs and long non-coding RNAs (lncRNAs). Within the integrator complex, INTS11 constitutes the RNA endonuclease subunit that degrades exiting nascent RNA transcripts. In Dictyostelium discoideum (Social amoeba), this protein is Integrator complex subunit 11 homolog (ints11).